The chain runs to 138 residues: Small ribosomal subunit protein uS11c (138 aa).

The segment at 1–21 (MTKAIQKIGSRRNGRIASRKN) is disordered. Residues 9–21 (GSRRNGRIASRKN) are compositionally biased toward basic residues.

It belongs to the universal ribosomal protein uS11 family. Part of the 30S ribosomal subunit.

The protein resides in the plastid. The protein localises to the chloroplast. In Ceratophyllum demersum (Rigid hornwort), this protein is Small ribosomal subunit protein uS11c.